Consider the following 255-residue polypeptide: Triosephosphate isomerase (255 aa).

A substrate-binding site is contributed by 9-11 (NWK). The active-site Electrophile is histidine 95. Glutamate 167 (proton acceptor) is an active-site residue. Substrate contacts are provided by residues glycine 173, serine 212, and 233–234 (GG).

This sequence belongs to the triosephosphate isomerase family. In terms of assembly, homodimer.

Its subcellular location is the cytoplasm. It carries out the reaction D-glyceraldehyde 3-phosphate = dihydroxyacetone phosphate. It participates in carbohydrate biosynthesis; gluconeogenesis. The protein operates within carbohydrate degradation; glycolysis; D-glyceraldehyde 3-phosphate from glycerone phosphate: step 1/1. Involved in the gluconeogenesis. Catalyzes stereospecifically the conversion of dihydroxyacetone phosphate (DHAP) to D-glyceraldehyde-3-phosphate (G3P). The protein is Triosephosphate isomerase of Erwinia tasmaniensis (strain DSM 17950 / CFBP 7177 / CIP 109463 / NCPPB 4357 / Et1/99).